Here is a 204-residue protein sequence, read N- to C-terminus: Putative peroxiredoxin ycf42 (204 aa).

One can recognise a Thioredoxin domain in the interval 5-163 (PKIGKTPPNF…LLRILESIQY (159 aa)).

It belongs to the peroxiredoxin family. AhpC/Prx1 subfamily.

The protein localises to the plastid. The protein resides in the chloroplast. It carries out the reaction a hydroperoxide + [protein]-dithiol = [protein]-disulfide + an alcohol + H2O. The protein is Putative peroxiredoxin ycf42 (ycf42) of Trieres chinensis (Marine centric diatom).